The following is a 370-amino-acid chain: 4-hydroxy-3-methylbut-2-en-1-yl diphosphate synthase (flavodoxin) (370 aa).

Positions 265, 268, 300, and 307 each coordinate [4Fe-4S] cluster.

Belongs to the IspG family. [4Fe-4S] cluster serves as cofactor.

It carries out the reaction (2E)-4-hydroxy-3-methylbut-2-enyl diphosphate + oxidized [flavodoxin] + H2O + 2 H(+) = 2-C-methyl-D-erythritol 2,4-cyclic diphosphate + reduced [flavodoxin]. It functions in the pathway isoprenoid biosynthesis; isopentenyl diphosphate biosynthesis via DXP pathway; isopentenyl diphosphate from 1-deoxy-D-xylulose 5-phosphate: step 5/6. Converts 2C-methyl-D-erythritol 2,4-cyclodiphosphate (ME-2,4cPP) into 1-hydroxy-2-methyl-2-(E)-butenyl 4-diphosphate. This chain is 4-hydroxy-3-methylbut-2-en-1-yl diphosphate synthase (flavodoxin), found in Symbiobacterium thermophilum (strain DSM 24528 / JCM 14929 / IAM 14863 / T).